The following is a 574-amino-acid chain: Proline--tRNA ligase (574 aa).

This sequence belongs to the class-II aminoacyl-tRNA synthetase family. ProS type 1 subfamily. As to quaternary structure, homodimer.

It is found in the cytoplasm. The catalysed reaction is tRNA(Pro) + L-proline + ATP = L-prolyl-tRNA(Pro) + AMP + diphosphate. In terms of biological role, catalyzes the attachment of proline to tRNA(Pro) in a two-step reaction: proline is first activated by ATP to form Pro-AMP and then transferred to the acceptor end of tRNA(Pro). As ProRS can inadvertently accommodate and process non-cognate amino acids such as alanine and cysteine, to avoid such errors it has two additional distinct editing activities against alanine. One activity is designated as 'pretransfer' editing and involves the tRNA(Pro)-independent hydrolysis of activated Ala-AMP. The other activity is designated 'posttransfer' editing and involves deacylation of mischarged Ala-tRNA(Pro). The misacylated Cys-tRNA(Pro) is not edited by ProRS. This is Proline--tRNA ligase from Aeromonas hydrophila subsp. hydrophila (strain ATCC 7966 / DSM 30187 / BCRC 13018 / CCUG 14551 / JCM 1027 / KCTC 2358 / NCIMB 9240 / NCTC 8049).